Reading from the N-terminus, the 89-residue chain is Phytosulfokines 1 (89 aa).

The signal sequence occupies residues 1 to 22 (MVNPGRTARALCLLCLALLLLG). Residues 23–79 (QDTHSRKLLLQEKHSHGVGNGTTTTQEPSRENGGSTGSNNNGQLQFDSAKWEEFHTD) constitute a propeptide that is removed on maturation. The segment at 33-70 (QEKHSHGVGNGTTTTQEPSRENGGSTGSNNNGQLQFDS) is disordered. Asn-42 is a glycosylation site (N-linked (GlcNAc...) asparagine). Residues Tyr-80 and Tyr-82 each carry the sulfotyrosine modification. Residues 85-89 (DVKKP) constitute a propeptide that is removed on maturation.

The protein belongs to the phytosulfokine family. Sulfation is important for activity and for the binding to a putative membrane receptor. In terms of processing, PSK-alpha is produced by endopeptidase digestion. PSK-beta is produced from PSK-alpha by exopeptidase digestion. As to expression, expressed throughout the seedling. More abundant in fragments containing shoot or root apexes where cells proliferate vigorously.

The protein resides in the secreted. Promotes plant cell differentiation, organogenesis and somatic embryogenesis as well as cell proliferation. This is Phytosulfokines 1 (PSK1) from Oryza sativa subsp. japonica (Rice).